Here is a 207-residue protein sequence, read N- to C-terminus: Tetrathionate reductase subunit B (207 aa).

An N-terminal signal peptide occupies residues 1–28 (MLISKTLIFYQVVNIVSQKGSGKRRWKM). 3 4Fe-4S ferredoxin-type domains span residues 34–63 (YVYV…PVGY), 75–106 (GRVA…KTEE), and 107–136 (GLVL…RNPV). The [4Fe-4S] cluster site is built by cysteine 43, cysteine 46, cysteine 49, cysteine 53, cysteine 84, cysteine 87, cysteine 92, cysteine 96, cysteine 116, cysteine 119, cysteine 122, cysteine 126, cysteine 143, cysteine 146, cysteine 157, and cysteine 161.

In terms of assembly, probably composed of three subunits: TtrA, TtrB and TtrC.

It is found in the cell membrane. In terms of biological role, part of a membrane-bound tetrathionate reductase that catalyzes the reduction of tetrathionate to thiosulfate. TtrB is probably involved in transfer of electrons from TtrC to TtrA. The polypeptide is Tetrathionate reductase subunit B (ttrB) (Archaeoglobus fulgidus (strain ATCC 49558 / DSM 4304 / JCM 9628 / NBRC 100126 / VC-16)).